The following is a 104-amino-acid chain: uncharacterized protein (104 aa).

Residues 1–23 (MDIHDYVELIALAFWVISVVSVG) form the signal peptide.

This is an uncharacterized protein from Lactobacillus helveticus (Lactobacillus suntoryeus).